Reading from the N-terminus, the 248-residue chain is tRNA pseudouridine synthase A (248 aa).

Residue aspartate 53 is the Nucleophile of the active site. Tyrosine 111 contributes to the substrate binding site.

It belongs to the tRNA pseudouridine synthase TruA family. In terms of assembly, homodimer.

The enzyme catalyses uridine(38/39/40) in tRNA = pseudouridine(38/39/40) in tRNA. Its function is as follows. Formation of pseudouridine at positions 38, 39 and 40 in the anticodon stem and loop of transfer RNAs. The polypeptide is tRNA pseudouridine synthase A (Listeria welshimeri serovar 6b (strain ATCC 35897 / DSM 20650 / CCUG 15529 / CIP 8149 / NCTC 11857 / SLCC 5334 / V8)).